A 167-amino-acid chain; its full sequence is Transcriptional repressor NrdR (167 aa).

A zinc finger spans residues cysteine 3 to cysteine 34. In terms of domain architecture, ATP-cone spans leucine 46–aspartate 136. The tract at residues alanine 148–leucine 167 is disordered.

This sequence belongs to the NrdR family. Zn(2+) is required as a cofactor.

In terms of biological role, negatively regulates transcription of bacterial ribonucleotide reductase nrd genes and operons by binding to NrdR-boxes. In Pseudarthrobacter chlorophenolicus (strain ATCC 700700 / DSM 12829 / CIP 107037 / JCM 12360 / KCTC 9906 / NCIMB 13794 / A6) (Arthrobacter chlorophenolicus), this protein is Transcriptional repressor NrdR.